The primary structure comprises 273 residues: Undecaprenyl-diphosphatase (273 aa).

7 consecutive transmembrane segments (helical) span residues 54–74 (LGSILAVVVMFWRQLFGLIGI), 90–110 (LTLIHILLGMIPAVVLGLVFH), 116–136 (LFNPINVMYALVVGGLLLIAA), 156–178 (QAFMIGCFQCLALWPGFSRSGAT), 190–210 (YAASEFSFLLAVPMMMGATVL), 222–242 (ADIPMFAVGFVTAFVVALIAI), and 252–272 (ISFIPFAIYRFVVAAAVYVVF).

The protein belongs to the UppP family.

It localises to the cell inner membrane. It carries out the reaction di-trans,octa-cis-undecaprenyl diphosphate + H2O = di-trans,octa-cis-undecaprenyl phosphate + phosphate + H(+). Its function is as follows. Catalyzes the dephosphorylation of undecaprenyl diphosphate (UPP). Confers resistance to bacitracin. The protein is Undecaprenyl-diphosphatase of Salmonella paratyphi A (strain ATCC 9150 / SARB42).